Consider the following 420-residue polypeptide: CinA-like protein (420 aa).

Belongs to the CinA family.

The protein is CinA-like protein of Syntrophus aciditrophicus (strain SB).